Reading from the N-terminus, the 125-residue chain is MFPKKKFLRCFCISRGRSSNRITLESPERNIPTGLRTYTASFNYLENPTSRMLDFSTSLTPDGLPDFTQTFRLPKTPTPSRTTSPKKVIIVNPGNIKCLGVQSQTKTTYITMPLMQVVREKLSTL.

This sequence belongs to the geminiviridae protein AC4/C4 family.

Functionally, pathogenicity determinant. May act as a suppressor of RNA-mediated gene silencing, also known as post-transcriptional gene silencing (PTGS), a mechanism of plant viral defense that limits the accumulation of viral RNAs. This chain is Protein AC4, found in Cucurbita moschata (Winter crookneck squash).